The primary structure comprises 101 residues: Anti-lipopolysaccharide factor (101 aa).

Cys31 and Cys52 are joined by a disulfide.

In terms of biological role, binds tightly to LPS and thus specifically inhibits the LPS-mediated activation of the hemolymph coagulation. It has a strong antibacterial effect especially on the growth of Gram-negative bacteria. This is Anti-lipopolysaccharide factor from Limulus polyphemus (Atlantic horseshoe crab).